A 799-amino-acid polypeptide reads, in one-letter code: E3 UFM1-protein ligase 1 homolog (799 aa).

The segment at 429-483 (TTTTTTTQPSKKKDNLINSDDDDNQDNNKKSSKGKNKKSKQQQSSIQKLINDSED) is disordered. Over residues 458–468 (KSSKGKNKKSK) the composition is skewed to basic residues. A compositionally biased stretch (low complexity) spans 469–478 (QQQSSIQKLI).

This sequence belongs to the UFL1 family.

Functionally, E3 UFM1-protein ligase that mediates ufmylation of target proteins. This Dictyostelium discoideum (Social amoeba) protein is E3 UFM1-protein ligase 1 homolog.